The following is a 527-amino-acid chain: MADSRDPASDQMKQWKEQRAPQKPDVLTTGGGNPIGDKLNIMTAGPRGPLLVQDVVFTDEMAHFDRERIPERVVHAKGAGAFGYFEVTHDITRYSKAKVFEHIGKRTPIAVRFSTVAGESGSADTVRDPRGFAVKFYTEDGNWDLVGNNTPIFFIRDAMLFPSFIHSQKRNPQTHLKDPDMVWDFWSLCPESLHQVTFLFSDRGIPDGHRHMNGYGSHTFKLVNANGEAVYCKFHYKTDQGIKNLPVEEAGRLAQEDPDYGLRDLFNAIASGNYPSWTFYIQVMTFKEAETFPFNPFDLTKVWPHKDYPLIPVGKLVLNRNPANYFAEVEQMAFDPSNMPPGIEPSPDKMLQGRLFAYPDTHRHRLGPNYLQIPVNCPYRARVANYQRDGPMCMHDNQGGAPNYYPNSFSAPEQQGSALEHHSQCSADVKRFNSANEDNVTQVRTFYTKVLNEEERKRLCENIANHLKDAQLFIQRKAVKNFTDVHPDYGARVQALLDQYNSQKPKNAIHTYVQAGSHIAAKGKANL.

A compositionally biased stretch (basic and acidic residues) spans M1 to Q22. The tract at residues M1–P34 is disordered. A2 is subject to N-acetylalanine. S9 is subject to Phosphoserine. K13 bears the N6-succinyllysine mark. Catalysis depends on residues H75 and N148. Positions 194, 201, 203, and 213 each coordinate NADP(+). An N6-succinyllysine modification is found at K221. K233 bears the N6-acetyllysine mark. 4 residues coordinate NADP(+): K237, W303, H305, and K306. N6-acetyllysine; alternate is present on K306. N6-succinyllysine; alternate is present on K306. Y358 is a heme binding site. Residues S417 and S434 each carry the phosphoserine modification. N6-acetyllysine; alternate is present on residues K449 and K480. An N6-succinyllysine; alternate mark is found at K449 and K480. T511 bears the Phosphothreonine mark. S517 carries the post-translational modification Phosphoserine. K522 is modified (N6-succinyllysine). Positions K524–L527 match the Microbody targeting signal; atypical motif.

The protein belongs to the catalase family. In terms of assembly, homotetramer. Interacts (via microbody targeting signal) with PEX5, monomeric form interacts with PEX5, leading to its translocation into peroxisomes. It depends on heme as a cofactor. The cofactor is NADP(+). As to expression, expressed in renal proximal tubules (at protein level).

It is found in the peroxisome matrix. The enzyme catalyses 2 H2O2 = O2 + 2 H2O. In terms of biological role, catalyzes the degradation of hydrogen peroxide (H(2)O(2)) generated by peroxisomal oxidases to water and oxygen, thereby protecting cells from the toxic effects of hydrogen peroxide. Promotes growth of cells including T-cells, B-cells, myeloid leukemia cells, melanoma cells, mastocytoma cells and normal and transformed fibroblast cells. The polypeptide is Catalase (Cat) (Rattus norvegicus (Rat)).